The following is a 456-amino-acid chain: Protein COBRA (456 aa).

Residues 1-36 form the signal peptide; it reads MESFFSRSTSIVSKLSFLALWIVFLISSSSFTSTEA. N-linked (GlcNAc...) asparagine glycans are attached at residues N45, N170, N178, N217, N242, N258, N328, N343, and N362. N431 is lipidated: GPI-anchor amidated asparagine. A propeptide spans 432 to 456 (removed in mature form); the sequence is GGSRSQFSFVAAVLLPLLVFFFFSA.

It belongs to the COBRA family. In terms of tissue distribution, expressed in roots, stems, leaves, flowers and siliques. Up-regulated in the root zone of rapid longitudinal expansion.

It localises to the lateral cell membrane. Functionally, involved in determining the orientation of cell expansion, probably by playing an important role in cellulose deposition. May act by recruiting cellulose synthesizing complexes to discrete positions on the cell surface. In Arabidopsis thaliana (Mouse-ear cress), this protein is Protein COBRA (COB).